The sequence spans 182 residues: CDP-diacylglycerol--glycerol-3-phosphate 3-phosphatidyltransferase (182 aa).

The Cytoplasmic segment spans residues 2–12 (QFNIPTLLTLF). A helical transmembrane segment spans residues 13–37 (RVILIPFFVVVFYLPFAWAPMVSAL). The Periplasmic portion of the chain corresponds to 38-60 (IFCIAAITDWFDGFLARRWNQST). A helical transmembrane segment spans residues 61-81 (RFGAFLDPVADKVLVAIAMVL). Over 82–86 (VTEHY) the chain is Cytoplasmic. A helical transmembrane segment spans residues 87–107 (HSWWVTLPAATMIAREIIISA). Over 108–145 (LREWMAELGKRSSVAVSWIGKVKTTAQMVALAWLLWRP) the chain is Periplasmic. A helical membrane pass occupies residues 146–168 (NIWVEYAGIALFFVAAVLTLWSM). Residues 169–181 (LQYLSAARGDLLD) are Cytoplasmic-facing.

The protein belongs to the CDP-alcohol phosphatidyltransferase class-I family.

It localises to the cell inner membrane. It carries out the reaction a CDP-1,2-diacyl-sn-glycerol + sn-glycerol 3-phosphate = a 1,2-diacyl-sn-glycero-3-phospho-(1'-sn-glycero-3'-phosphate) + CMP + H(+). The protein operates within phospholipid metabolism; phosphatidylglycerol biosynthesis; phosphatidylglycerol from CDP-diacylglycerol: step 1/2. In terms of biological role, catalyzes the conversion of cytidine diphosphate diacylglycerol (CDP-DG) and glycerol 3-phosphate into phosphatidylglycerol. Essential for the synthesis of anionic phospholipids, thereby playing a role in balancing the ratio of zwitterionic and anionic phospholipids, which is thought to be important for normal membrane function. The chain is CDP-diacylglycerol--glycerol-3-phosphate 3-phosphatidyltransferase from Salmonella paratyphi A (strain ATCC 9150 / SARB42).